A 236-amino-acid chain; its full sequence is Uridylate kinase (236 aa).

ATP is bound at residue 12-15 (KISG). The involved in allosteric activation by GTP stretch occupies residues 20–25 (GKKGFG). G54 is a binding site for UMP. The ATP site is built by G55 and R59. Residues D72 and 133 to 140 (TGNPYFST) each bind UMP. The ATP site is built by Y166 and D169.

The protein belongs to the UMP kinase family. As to quaternary structure, homohexamer.

Its subcellular location is the cytoplasm. The enzyme catalyses UMP + ATP = UDP + ADP. It functions in the pathway pyrimidine metabolism; CTP biosynthesis via de novo pathway; UDP from UMP (UMPK route): step 1/1. Allosterically activated by GTP. Inhibited by UTP. Functionally, catalyzes the reversible phosphorylation of UMP to UDP. The sequence is that of Uridylate kinase from Clostridium novyi (strain NT).